The following is a 514-amino-acid chain: Ubiquitin carboxyl-terminal hydrolase 22 (514 aa).

A UBP-type zinc finger spans residues P10–M127. Zn(2+) contacts are provided by C12, H14, C52, C55, C65, C68, C73, H78, H82, H88, C101, and C104. The residue at position 118 (K118) is an N6-acetyllysine. Phosphothreonine is present on T136. The USP domain maps to R165–Q509. The Nucleophile role is filled by C174. The residue at position 226 (S226) is a Phosphoserine. H468 acts as the Proton acceptor in catalysis.

Belongs to the peptidase C19 family. UBP8 subfamily. Component of some SAGA transcription coactivator-HAT complexes, at least composed of ATXN7, ATXN7L3, ENY2, GCN5L2, SUPT3H, TAF10, TRRAP and USP22. Within the SAGA complex, ATXN7L3, ENY2 and USP22 form a subcomplex required for histone deubiquitination. Interacts directly with ATXN7L3; leading to its recruitment to the SAGA complex. Interacts with ATXN7L3 and weakly with ATXN7L3B. Interacts with MED1. Phosphorylated in G2/M phase, but not in G1 phase by CDK1. Post-translationally, ubiquitinated and subsequently degraded in a CDC20-dependent manner.

It localises to the nucleus. The protein localises to the cytoplasm. It catalyses the reaction Thiol-dependent hydrolysis of ester, thioester, amide, peptide and isopeptide bonds formed by the C-terminal Gly of ubiquitin (a 76-residue protein attached to proteins as an intracellular targeting signal).. Functionally, deubiquitinase that plays a role in several cellular processes including transcriptional regulation, cell cycle progression or innate immunity. As part of the transcription regulatory histone acetylation (HAT) complex SAGA, catalyzes the deubiquitination of both histones H2A and H2B, thereby acting as a transcriptional coactivator. Recruited to specific gene promoters by activators such as MYC, where it is required for transcription. Facilitates cell-cycle progression by stabilizing CCNB1 and antagonizing its proteasome-mediated degradation in a cell cycle-specific manner. Modulates cell cycle progression and apoptosis also by antagonizing TP53 transcriptional activation through deacetylase SIRT1 stabilization. Plays multiple roles in immunity and inflammation. Participates in antiviral response by deubiquitinating the importin KPNA2, leading to IRF3 nuclear translocation and subsequent type I interferon production. Acts as a central regulator of type III IFN signaling by negatively regulating STING1 activation and ubiquitination. Inhibits NLRP3 inflammasome activation by promoting NLRP3 degradation through ATG5-dependent autophagy. Deubiquitinates CD274 to induce its stabilization and thereby participates in maintenance of immune tolerance to self. Controls necroptotic cell death by regulating RIPK3 phosphorylation and ubiquitination. During bacterial infection, promotes pro-inflammatory response by targeting TRAF6 and removing its 'Lys-48'-linked polyubiquitination. In Bos taurus (Bovine), this protein is Ubiquitin carboxyl-terminal hydrolase 22 (USP22).